A 101-amino-acid polypeptide reads, in one-letter code: Small ribosomal subunit protein uS14 (101 aa).

Positions 46–72 are disordered; sequence FELNRQPRDASPVRVRNRDSRDGRPRG. Positions 61–70 are enriched in basic and acidic residues; the sequence is RNRDSRDGRP.

Belongs to the universal ribosomal protein uS14 family. Part of the 30S ribosomal subunit. Contacts proteins S3 and S10.

Its function is as follows. Binds 16S rRNA, required for the assembly of 30S particles and may also be responsible for determining the conformation of the 16S rRNA at the A site. The sequence is that of Small ribosomal subunit protein uS14 from Corynebacterium diphtheriae (strain ATCC 700971 / NCTC 13129 / Biotype gravis).